The sequence spans 259 residues: NADPH-dependent reductase BacG (259 aa).

Residues 12–15 (SQGI), 34–36 (SRN), 62–63 (DM), I90, K113, and 185–191 (GFIATDR) each bind NADP(+).

Belongs to the short-chain dehydrogenases/reductases (SDR) family. As to quaternary structure, homodimer.

It is found in the cytoplasm. The protein operates within antibiotic biosynthesis; bacilysin biosynthesis. In terms of biological role, along with the bacABCDEF operon, BacG is involved in the biosynthesis of the nonribosomally synthesized dipeptide antibiotic bacilysin, composed of L-alanine and L-anticapsin. Bacilysin is an irreversible inactivator of the glutaminase domain of glucosamine synthetase. BacG catalyzes the stereoselective reduction of exocyclic-delta(3),delta(5)-dihydro-hydroxyphenylpyruvate (ex-H2HPP), adding a pro-S hydride equivalent to C4 position to yield tetrahydro-hydroxyphenylpyruvate (H4HPP). Although the 3Z,7R-ex-H2HPP isomer is kinetically disfavored by BacB and produced in a smaller quantity than 3E,7R-ex-H2HPP, it is the preferred substrate for the conjugate reduction reaction of BacG. This is NADPH-dependent reductase BacG from Bacillus subtilis (strain 168).